A 157-amino-acid polypeptide reads, in one-letter code: Dihydrofolate reductase type 1 (157 aa).

One can recognise a DHFR domain in the interval 2–156 (KLSLMVAISK…INYSYQIWQK (155 aa)).

The protein belongs to the dihydrofolate reductase family. Homodimer.

The catalysed reaction is (6S)-5,6,7,8-tetrahydrofolate + NADP(+) = 7,8-dihydrofolate + NADPH + H(+). It participates in cofactor biosynthesis; tetrahydrofolate biosynthesis; 5,6,7,8-tetrahydrofolate from 7,8-dihydrofolate: step 1/1. Its function is as follows. Key enzyme in folate metabolism. Catalyzes an essential reaction for de novo glycine and purine synthesis, and for DNA precursor synthesis. In Escherichia coli, this protein is Dihydrofolate reductase type 1 (dhfrI).